Consider the following 370-residue polypeptide: MAAERQDALREFVAVTGAEEDRARFFLESAGWDLQIALASFYEDGGDEDIVTISQATPSSVSRGTAPSDNRVTSFRDLIHDQDEDEEEEEGQRFYAGGSERSGQQIVGPPRKRSPNELVDDLFKGAKEHGAVAVERVTKSPGETSKPRPFAGGGYRLGAAPEEESAYVAGERRRHSGQDVHVVLKLWKTGFSLDNGELRSYQDPSNAQFLESIRRGEVPAELRRLAHGGQVNLDMEDHRDEDFVKPKGAFKAFTGEGQKLGSTAPQILNTSSPAQQAENEAKASSSISIDESQPTTNIQIRLADGGRLVQKFNHSHRISDIRLFIVDARPAMAATSFVLMTTFPNKELADENQTLKEANLLNAVIVQRLT.

The segment at 54 to 73 (SQATPSSVSRGTAPSDNRVT) is disordered. Residues S74, S102, and S114 each carry the phosphoserine modification. 2 disordered regions span residues 80–116 (HDQD…RSPN) and 137–157 (VTKS…GYRL). The Nuclear localization signal motif lies at 109-115 (PPRKRSP). At S140 the chain carries Phosphoserine; by CDK1. At Y167 the chain carries Phosphotyrosine. Positions 172-175 (RRRH) match the Nuclear localization signal motif. Phosphoserine occurs at positions 176, 192, and 272. The SEP domain occupies 179–244 (DVHVVLKLWK…MEDHRDEDFV (66 aa)). The interval 272 to 292 (SPAQQAENEAKASSSISIDES) is disordered. Residues 291 to 368 (ESQPTTNIQI…NLLNAVIVQR (78 aa)) enclose the UBX domain.

In terms of assembly, part of a ternary complex containing STX5A, NSFL1C and VCP. NSFL1C forms a homotrimer that binds to one end of a VCP homohexamer. The complex binds to membranes enriched in phosphatidylethanolamine-containing lipids and promotes Golgi membrane fusion. Interaction with VCIP135 leads to dissociation of the complex via ATP hydrolysis by VCP. Binds ubiquitin and mono-ubiquitinated proteins via its N-terminal UBA-like domain when bound to VCP. In terms of processing, phosphorylated during mitosis. Phosphorylation inhibits interaction with Golgi membranes and is required for the fragmentation of the Golgi stacks during mitosis.

The protein resides in the nucleus. It is found in the golgi apparatus. Its subcellular location is the golgi stack. The protein localises to the chromosome. It localises to the cytoplasm. The protein resides in the cytoskeleton. It is found in the microtubule organizing center. Its subcellular location is the centrosome. Functionally, reduces the ATPase activity of VCP. Necessary for the fragmentation of Golgi stacks during mitosis and for VCP-mediated reassembly of Golgi stacks after mitosis. May play a role in VCP-mediated formation of transitional endoplasmic reticulum (tER). Inhibits the activity of CTSL (in vitro). Together with UBXN2B/p37, regulates the centrosomal levels of kinase AURKA/Aurora A during mitotic progression by promoting AURKA removal from centrosomes in prophase. Also, regulates spindle orientation during mitosis. The chain is NSFL1 cofactor p47 (NSFL1C) from Bos taurus (Bovine).